Reading from the N-terminus, the 286-residue chain is NAD kinase (286 aa).

D74 acts as the Proton acceptor in catalysis. NAD(+) is bound by residues 74–75 (DG), 148–149 (ND), D178, A186, 189–194 (TAYNLS), and Q244.

The protein belongs to the NAD kinase family. A divalent metal cation is required as a cofactor.

The protein localises to the cytoplasm. The catalysed reaction is NAD(+) + ATP = ADP + NADP(+) + H(+). Functionally, involved in the regulation of the intracellular balance of NAD and NADP, and is a key enzyme in the biosynthesis of NADP. Catalyzes specifically the phosphorylation on 2'-hydroxyl of the adenosine moiety of NAD to yield NADP. The polypeptide is NAD kinase (Campylobacter jejuni subsp. doylei (strain ATCC BAA-1458 / RM4099 / 269.97)).